Reading from the N-terminus, the 290-residue chain is Oxaloacetate decarboxylase 2 (290 aa).

Serine 50 lines the substrate pocket. Aspartate 88 lines the Mg(2+) pocket. The substrate site is built by arginine 159 and histidine 235.

The protein belongs to the isocitrate lyase/PEP mutase superfamily. Oxaloacetate decarboxylase family. As to quaternary structure, homotetramer; dimer of dimers. Mg(2+) is required as a cofactor.

The enzyme catalyses oxaloacetate + H(+) = pyruvate + CO2. In terms of biological role, catalyzes the decarboxylation of oxaloacetate into pyruvate. Seems to play a role in maintaining cellular concentrations of bicarbonate and pyruvate. The protein is Oxaloacetate decarboxylase 2 of Pseudomonas fluorescens (strain Pf0-1).